Consider the following 858-residue polypeptide: Alanine--tRNA ligase (858 aa).

Zn(2+)-binding residues include His-550, His-554, Cys-652, and His-656.

It belongs to the class-II aminoacyl-tRNA synthetase family. It depends on Zn(2+) as a cofactor.

It localises to the cytoplasm. The catalysed reaction is tRNA(Ala) + L-alanine + ATP = L-alanyl-tRNA(Ala) + AMP + diphosphate. Its function is as follows. Catalyzes the attachment of alanine to tRNA(Ala) in a two-step reaction: alanine is first activated by ATP to form Ala-AMP and then transferred to the acceptor end of tRNA(Ala). Also edits incorrectly charged Ser-tRNA(Ala) and Gly-tRNA(Ala) via its editing domain. In Pseudothermotoga lettingae (strain ATCC BAA-301 / DSM 14385 / NBRC 107922 / TMO) (Thermotoga lettingae), this protein is Alanine--tRNA ligase.